A 91-amino-acid chain; its full sequence is Putative regulatory protein Helmi_20580 (91 aa).

It belongs to the RemA family.

This Heliobacterium modesticaldum (strain ATCC 51547 / Ice1) protein is Putative regulatory protein Helmi_20580.